A 141-amino-acid chain; its full sequence is Large ribosomal subunit protein uL11 (141 aa).

Belongs to the universal ribosomal protein uL11 family. Part of the ribosomal stalk of the 50S ribosomal subunit. Interacts with L10 and the large rRNA to form the base of the stalk. L10 forms an elongated spine to which L12 dimers bind in a sequential fashion forming a multimeric L10(L12)X complex. One or more lysine residues are methylated.

Its function is as follows. Forms part of the ribosomal stalk which helps the ribosome interact with GTP-bound translation factors. The protein is Large ribosomal subunit protein uL11 of Chlamydia trachomatis serovar L2 (strain ATCC VR-902B / DSM 19102 / 434/Bu).